A 569-amino-acid polypeptide reads, in one-letter code: Proline--tRNA ligase (569 aa).

It belongs to the class-II aminoacyl-tRNA synthetase family. ProS type 1 subfamily. As to quaternary structure, homodimer.

The protein resides in the cytoplasm. It catalyses the reaction tRNA(Pro) + L-proline + ATP = L-prolyl-tRNA(Pro) + AMP + diphosphate. Functionally, catalyzes the attachment of proline to tRNA(Pro) in a two-step reaction: proline is first activated by ATP to form Pro-AMP and then transferred to the acceptor end of tRNA(Pro). As ProRS can inadvertently accommodate and process non-cognate amino acids such as alanine and cysteine, to avoid such errors it has two additional distinct editing activities against alanine. One activity is designated as 'pretransfer' editing and involves the tRNA(Pro)-independent hydrolysis of activated Ala-AMP. The other activity is designated 'posttransfer' editing and involves deacylation of mischarged Ala-tRNA(Pro). The misacylated Cys-tRNA(Pro) is not edited by ProRS. This Campylobacter jejuni (strain RM1221) protein is Proline--tRNA ligase.